The primary structure comprises 413 residues: Multifunctional CCA protein (413 aa).

Positions 8 and 11 each coordinate ATP. Residues G8 and R11 each coordinate CTP. Mg(2+) contacts are provided by D21 and D23. ATP is bound by residues R91, R143, and R146. Residues R91, R143, and R146 each coordinate CTP. The region spanning 232-333 (TGVHVMMVVD…VRLFERSDAL (102 aa)) is the HD domain.

Belongs to the tRNA nucleotidyltransferase/poly(A) polymerase family. Bacterial CCA-adding enzyme type 1 subfamily. As to quaternary structure, monomer. Can also form homodimers and oligomers. Mg(2+) serves as cofactor. Requires Ni(2+) as cofactor.

The catalysed reaction is a tRNA precursor + 2 CTP + ATP = a tRNA with a 3' CCA end + 3 diphosphate. It catalyses the reaction a tRNA with a 3' CCA end + 2 CTP + ATP = a tRNA with a 3' CCACCA end + 3 diphosphate. Its function is as follows. Catalyzes the addition and repair of the essential 3'-terminal CCA sequence in tRNAs without using a nucleic acid template. Adds these three nucleotides in the order of C, C, and A to the tRNA nucleotide-73, using CTP and ATP as substrates and producing inorganic pyrophosphate. tRNA 3'-terminal CCA addition is required both for tRNA processing and repair. Also involved in tRNA surveillance by mediating tandem CCA addition to generate a CCACCA at the 3' terminus of unstable tRNAs. While stable tRNAs receive only 3'-terminal CCA, unstable tRNAs are marked with CCACCA and rapidly degraded. The polypeptide is Multifunctional CCA protein (Burkholderia cenocepacia (strain ATCC BAA-245 / DSM 16553 / LMG 16656 / NCTC 13227 / J2315 / CF5610) (Burkholderia cepacia (strain J2315))).